The sequence spans 284 residues: Small ribosomal subunit protein uS5 (284 aa).

Basic and acidic residues predominate over residues 1–10; it reads MMADEKKTPE. Residues 1-105 form a disordered region; sequence MMADEKKTPE…DNRRGGRREE (105 aa). Residues 14–23 are compositionally biased toward low complexity; sequence ETATPAVAVE. A compositionally biased stretch (basic and acidic residues) spans 24–43; sequence DALKAEPTETLEAQKAKAEA. The span at 44 to 67 shows a compositional bias: low complexity; sequence ETPAVAETPSEAAANQSAAQGAEG. Residues 68–105 show a composition bias toward basic and acidic residues; that stretch reads QPRERGGHDRGGRGGRGGNDRGRGRGGRDNRRGGRREE. Residues 110–173 form the S5 DRBM domain; sequence IIEKLVHINR…AAARKKMIRV (64 aa). Positions 246-284 are disordered; the sequence is DQTSPKSVAQRRGKKVADLLGRGGASEAEAEADAAAIAE.

The protein belongs to the universal ribosomal protein uS5 family. Part of the 30S ribosomal subunit. Contacts proteins S4 and S8.

Functionally, with S4 and S12 plays an important role in translational accuracy. In terms of biological role, located at the back of the 30S subunit body where it stabilizes the conformation of the head with respect to the body. This is Small ribosomal subunit protein uS5 from Erythrobacter litoralis (strain HTCC2594).